The following is a 1437-amino-acid chain: DNA polymerase III PolC-type (1437 aa).

Residues 420-576 (YVIFDVETTG…YDSETTGHLC (157 aa)) enclose the Exonuclease domain.

It belongs to the DNA polymerase type-C family. PolC subfamily.

It is found in the cytoplasm. It carries out the reaction DNA(n) + a 2'-deoxyribonucleoside 5'-triphosphate = DNA(n+1) + diphosphate. Its function is as follows. Required for replicative DNA synthesis. This DNA polymerase also exhibits 3' to 5' exonuclease activity. The chain is DNA polymerase III PolC-type from Pediococcus pentosaceus (strain ATCC 25745 / CCUG 21536 / LMG 10740 / 183-1w).